A 473-amino-acid polypeptide reads, in one-letter code: Glucose facilitated diffusion protein (473 aa).

Residues 1–13 lie on the Cytoplasmic side of the membrane; that stretch reads MSSESSQGLVTRL. The chain crosses the membrane as a helical span at residues 14–34; the sequence is ALIAAIGGLLFGYDSAVIAAI. Residues 35-59 lie on the Periplasmic side of the membrane; that stretch reads GTPVDIHFIAPRHLSATAAASLSGM. The helical transmembrane segment at 60–80 threads the bilayer; it reads VVVAVLVGCVTGSLLSGWIGI. The Cytoplasmic portion of the chain corresponds to 81 to 85; the sequence is RFGRR. The helical transmembrane segment at 86–106 threads the bilayer; sequence GGLLMSSICFVAAGFGAALTE. The Periplasmic portion of the chain corresponds to 107–112; that stretch reads KLFGTG. The helical transmembrane segment at 113–133 threads the bilayer; the sequence is GSALQIFCFFRFLAGLGIGVV. Over 134-158 the chain is Cytoplasmic; that stretch reads STLTPTYIAEIAPPDKRGQMVSGQQ. The helical transmembrane segment at 159 to 179 threads the bilayer; sequence MAIVTGALTGYIFTWLLAHFG. The Periplasmic segment spans residues 180 to 187; sequence SIDWVNAS. Residues 188 to 208 form a helical membrane-spanning segment; the sequence is GWCWSPASEGLIGIAFLLLLL. Residues 209–257 are Cytoplasmic-facing; the sequence is TAPDTPHWLVMKGRHSEASKILARLEPQADPNLTIQKIKAGFDKAMDKS. The chain crosses the membrane as a helical span at residues 258 to 278; that stretch reads SAGLFAFGITVVFAGVSVAAF. Topologically, residues 279-303 are periplasmic; the sequence is QQLVGINAVLYYAPQMFQNLGFGAD. The helical transmembrane segment at 304 to 324 threads the bilayer; that stretch reads TALLQTISIGVVNFIFTMIAS. Residues 325–335 lie on the Cytoplasmic side of the membrane; sequence RVVDRFGRKPL. The chain crosses the membrane as a helical span at residues 336–356; it reads LIWGALGMAAMMAVLGCCFWF. The Periplasmic segment spans residues 357–366; the sequence is KVGGVLPLAS. Residues 367-387 form a helical membrane-spanning segment; the sequence is VLLYIAVFGMSWGPVCWVVLS. The Cytoplasmic segment spans residues 388 to 396; that stretch reads EMFPSSIKG. The chain crosses the membrane as a helical span at residues 397–417; it reads AAMPIAVTGQWLANILVNFLF. Topologically, residues 418–429 are periplasmic; the sequence is KVADGSPALNQT. The chain crosses the membrane as a helical span at residues 430–450; that stretch reads FNHGFSYLVFAALSILGGLIV. Topologically, residues 451–473 are cytoplasmic; the sequence is ARFVPETKGRSLDEIEEMWRSQK.

Belongs to the major facilitator superfamily. Sugar transporter (TC 2.A.1.1) family.

The protein localises to the cell inner membrane. Functionally, allows uptake of glucose by the cell; allows growth on glucose minimal medium by E.coli cells impaired in glucose transport. Also transports fructose, but has a strong preference for glucose. This Zymomonas mobilis subsp. mobilis (strain ATCC 31821 / ZM4 / CP4) protein is Glucose facilitated diffusion protein.